A 191-amino-acid polypeptide reads, in one-letter code: Peptidyl-tRNA hydrolase (191 aa).

Tyr-17 lines the tRNA pocket. The active-site Proton acceptor is His-22. TRNA-binding residues include Tyr-68, Asn-70, and Asn-116.

It belongs to the PTH family. In terms of assembly, monomer.

The protein localises to the cytoplasm. It catalyses the reaction an N-acyl-L-alpha-aminoacyl-tRNA + H2O = an N-acyl-L-amino acid + a tRNA + H(+). Its function is as follows. Hydrolyzes ribosome-free peptidyl-tRNAs (with 1 or more amino acids incorporated), which drop off the ribosome during protein synthesis, or as a result of ribosome stalling. Catalyzes the release of premature peptidyl moieties from peptidyl-tRNA molecules trapped in stalled 50S ribosomal subunits, and thus maintains levels of free tRNAs and 50S ribosomes. The protein is Peptidyl-tRNA hydrolase of Mycolicibacterium smegmatis (strain ATCC 700084 / mc(2)155) (Mycobacterium smegmatis).